A 76-amino-acid chain; its full sequence is Heat shock factor-binding protein 1 (76 aa).

This sequence belongs to the HSBP1 family. In terms of assembly, homohexamer. Associates with heptad repeats of HSF1 trimers and probably also HSF1 monomers, and with HSP70. Association with HSF1 trimers and HSP70 coincides with attenuation of heat shock response and the conversion of HSF1 trimer to monomer.

Its subcellular location is the nucleus. Its function is as follows. Negative regulator of the heat shock response. Negatively affects HSF1 DNA-binding activity. May have a role in the suppression of the activation of the stress response during the aging process. In Bos taurus (Bovine), this protein is Heat shock factor-binding protein 1 (HSBP1).